The sequence spans 204 residues: ADP-ribosylation factor-like protein 15 (204 aa).

Residues 39–46 (GLTGSGKT), 82–86 (ELGGA), and 142–145 (NHQD) each bind GTP.

It belongs to the small GTPase superfamily. Arf family.

The polypeptide is ADP-ribosylation factor-like protein 15 (ARL15) (Homo sapiens (Human)).